Consider the following 307-residue polypeptide: Fructokinase (307 aa).

It belongs to the carbohydrate kinase PfkB family.

The enzyme catalyses D-fructose + ATP = D-fructose 6-phosphate + ADP + H(+). In terms of biological role, involved in sucrose metabolism. The sequence is that of Fructokinase (scrK) from Klebsiella pneumoniae.